A 100-amino-acid polypeptide reads, in one-letter code: NADH-quinone oxidoreductase subunit K (100 aa).

Helical transmembrane passes span 4–24 (TSYY…GVLI), 29–49 (LVLF…LVTF), and 60–80 (IVVF…LALL).

Belongs to the complex I subunit 4L family. NDH-1 is composed of 14 different subunits. Subunits NuoA, H, J, K, L, M, N constitute the membrane sector of the complex.

The protein resides in the cell membrane. It carries out the reaction a quinone + NADH + 5 H(+)(in) = a quinol + NAD(+) + 4 H(+)(out). In terms of biological role, NDH-1 shuttles electrons from NADH, via FMN and iron-sulfur (Fe-S) centers, to quinones in the respiratory chain. The immediate electron acceptor for the enzyme in this species is believed to be ubiquinone. Couples the redox reaction to proton translocation (for every two electrons transferred, four hydrogen ions are translocated across the cytoplasmic membrane), and thus conserves the redox energy in a proton gradient. This is NADH-quinone oxidoreductase subunit K from Roseiflexus sp. (strain RS-1).